Here is a 103-residue protein sequence, read N- to C-terminus: Histone H4 (103 aa).

Positions 1–14 (MTGRGKGGKGLGKG) are enriched in gly residues. The disordered stretch occupies residues 1–20 (MTGRGKGGKGLGKGGAKRHR). Lysine 6 carries the N6-acetyl-N6-methyllysine; alternate modification. N6-methyllysine; alternate is present on residues lysine 6, lysine 9, and lysine 13. An N6-acetyl-N6-methyllysine; alternate modification is found at lysine 13. The DNA-binding element occupies 17–21 (KRHRK). Lysine 92 is subject to N6-glutaryllysine.

The protein belongs to the histone H4 family. In terms of assembly, the nucleosome is a histone octamer containing two molecules each of H2A, H2B, H3 and H4 assembled in one H3-H4 heterotetramer and two H2A-H2B heterodimers. The octamer wraps approximately 147 bp of DNA. Post-translationally, glutarylation at Lys-92 (H4K91glu) destabilizes nucleosomes by promoting dissociation of the H2A-H2B dimers from nucleosomes.

It is found in the nucleus. Its subcellular location is the chromosome. Core component of nucleosome. Nucleosomes wrap and compact DNA into chromatin, limiting DNA accessibility to the cellular machineries which require DNA as a template. Histones thereby play a central role in transcription regulation, DNA repair, DNA replication and chromosomal stability. DNA accessibility is regulated via a complex set of post-translational modifications of histones, also called histone code, and nucleosome remodeling. The polypeptide is Histone H4 (hH4-1) (Neurospora crassa (strain ATCC 24698 / 74-OR23-1A / CBS 708.71 / DSM 1257 / FGSC 987)).